A 180-amino-acid polypeptide reads, in one-letter code: Large ribosomal subunit protein uL5 (180 aa).

This sequence belongs to the universal ribosomal protein uL5 family. As to quaternary structure, part of the 50S ribosomal subunit; part of the 5S rRNA/L5/L18/L25 subcomplex. Contacts the 5S rRNA and the P site tRNA. Forms a bridge to the 30S subunit in the 70S ribosome.

Its function is as follows. This is one of the proteins that bind and probably mediate the attachment of the 5S RNA into the large ribosomal subunit, where it forms part of the central protuberance. In the 70S ribosome it contacts protein S13 of the 30S subunit (bridge B1b), connecting the 2 subunits; this bridge is implicated in subunit movement. Contacts the P site tRNA; the 5S rRNA and some of its associated proteins might help stabilize positioning of ribosome-bound tRNAs. This Rippkaea orientalis (strain PCC 8801 / RF-1) (Cyanothece sp. (strain PCC 8801)) protein is Large ribosomal subunit protein uL5.